A 160-amino-acid polypeptide reads, in one-letter code: Cytochrome b6-f complex subunit 4 (160 aa).

The next 3 membrane-spanning stretches (helical) occupy residues Leu36–Val56, Leu95–Glu115, and Thr131–Ile151.

Belongs to the cytochrome b family. PetD subfamily. In terms of assembly, the 4 large subunits of the cytochrome b6-f complex are cytochrome b6, subunit IV (17 kDa polypeptide, petD), cytochrome f and the Rieske protein, while the 4 small subunits are petG, petL, petM and petN. The complex functions as a dimer.

It localises to the plastid. Its subcellular location is the chloroplast thylakoid membrane. In terms of biological role, component of the cytochrome b6-f complex, which mediates electron transfer between photosystem II (PSII) and photosystem I (PSI), cyclic electron flow around PSI, and state transitions. The protein is Cytochrome b6-f complex subunit 4 of Sorghum bicolor (Sorghum).